The following is a 213-amino-acid chain: Uracil phosphoribosyltransferase (213 aa).

5-phospho-alpha-D-ribose 1-diphosphate is bound by residues arginine 78, arginine 103, and aspartate 131–threonine 139. Residues isoleucine 197 and glycine 202–alanine 204 each bind uracil. Aspartate 203 provides a ligand contact to 5-phospho-alpha-D-ribose 1-diphosphate.

The protein belongs to the UPRTase family. It depends on Mg(2+) as a cofactor.

It carries out the reaction UMP + diphosphate = 5-phospho-alpha-D-ribose 1-diphosphate + uracil. Its pathway is pyrimidine metabolism; UMP biosynthesis via salvage pathway; UMP from uracil: step 1/1. With respect to regulation, allosterically activated by GTP. Functionally, catalyzes the conversion of uracil and 5-phospho-alpha-D-ribose 1-diphosphate (PRPP) to UMP and diphosphate. This chain is Uracil phosphoribosyltransferase, found in Bifidobacterium longum subsp. infantis (strain ATCC 15697 / DSM 20088 / JCM 1222 / NCTC 11817 / S12).